Here is a 266-residue protein sequence, read N- to C-terminus: Small ribosomal subunit protein uS3 (266 aa).

One can recognise a KH type-2 domain in the interval 39-107 (VREYLKKKLK…PVHVNIEEIR (69 aa)). The disordered stretch occupies residues 214 to 266 (PVVEEVTEDKRPRRNARPGDRRPRRDGEGGAPGARRGGPRRGAGKPEDGKTGE). 2 stretches are compositionally biased toward basic and acidic residues: residues 230-241 (RPGDRRPRRDGE) and 257-266 (GKPEDGKTGE).

It belongs to the universal ribosomal protein uS3 family. In terms of assembly, part of the 30S ribosomal subunit. Forms a tight complex with proteins S10 and S14.

Binds the lower part of the 30S subunit head. Binds mRNA in the 70S ribosome, positioning it for translation. This chain is Small ribosomal subunit protein uS3, found in Burkholderia thailandensis (strain ATCC 700388 / DSM 13276 / CCUG 48851 / CIP 106301 / E264).